Reading from the N-terminus, the 165-residue chain is MAQVTLKGNPVNVDGQLPQKGAQAPAFSLVGGDLADVTLENFAGKRKVLNIFPSVDTPTCATSVRKFNVEAGKLANTVVLCISADLPFAQKRFCGAEGLENVVNLSTLRGREFLENYGVAIASGPLAGLAARAVVVLDEQNKVLHSELVGEIADEPNYAAALAAL.

One can recognise a Thioredoxin domain in the interval 18 to 165 (PQKGAQAPAF…PNYAAALAAL (148 aa)). The active-site Cysteine sulfenic acid (-SOH) intermediate is Cys60. Cys60 and Cys94 are joined by a disulfide.

The protein belongs to the peroxiredoxin family. Tpx subfamily. In terms of assembly, homodimer.

The catalysed reaction is a hydroperoxide + [thioredoxin]-dithiol = an alcohol + [thioredoxin]-disulfide + H2O. Functionally, thiol-specific peroxidase that catalyzes the reduction of hydrogen peroxide and organic hydroperoxides to water and alcohols, respectively. Plays a role in cell protection against oxidative stress by detoxifying peroxides. This is Thiol peroxidase from Pseudomonas aeruginosa (strain ATCC 15692 / DSM 22644 / CIP 104116 / JCM 14847 / LMG 12228 / 1C / PRS 101 / PAO1).